The following is a 1321-amino-acid chain: Adhesion G protein-coupled receptor A3 (1321 aa).

Positions methionine 1–glycine 33 are cleaved as a signal peptide. The Extracellular segment spans residues glycine 34–proline 761. N-linked (GlcNAc...) asparagine glycans are attached at residues asparagine 81 and asparagine 98. LRR repeat units lie at residues arginine 82–glycine 103, leucine 106–glycine 127, serine 130–glycine 151, and asparagine 154–tyrosine 175. Residues asparagine 159, asparagine 206, asparagine 301, asparagine 332, asparagine 433, asparagine 453, and asparagine 592 are each glycosylated (N-linked (GlcNAc...) asparagine). In terms of domain architecture, LRRCT spans glutamate 187 to proline 237. Residues proline 242–valine 340 enclose the Ig-like domain. Cysteine 264 and cysteine 324 are joined by a disulfide. Residues leucine 583–glutamate 750 form the GAIN-B domain. The LRR 5 repeat unit spans residues serine 594–proline 620. N-linked (GlcNAc...) asparagine glycosylation is found at asparagine 652, asparagine 687, and asparagine 728. The tract at residues alanine 701–glutamate 750 is GPS. An intrachain disulfide couples cysteine 720 to cysteine 734. Residues valine 762–isoleucine 782 traverse the membrane as a helical segment. At tyrosine 783–histidine 796 the chain is on the cytoplasmic side. A helical membrane pass occupies residues methionine 797 to threonine 817. Over glutamine 818–glutamine 826 the chain is Extracellular. Residue asparagine 821 is glycosylated (N-linked (GlcNAc...) asparagine). A helical membrane pass occupies residues alanine 827–alanine 847. The Cytoplasmic portion of the chain corresponds to arginine 848 to arginine 876. The helical transmembrane segment at phenylalanine 877–isoleucine 897 threads the bilayer. Topologically, residues lysine 898–alanine 919 are extracellular. Residues phenylalanine 920–isoleucine 940 traverse the membrane as a helical segment. Residues glutamine 941–leucine 996 are Cytoplasmic-facing. Residues leucine 997–valine 1017 traverse the membrane as a helical segment. Topologically, residues serine 1018–aspartate 1024 are extracellular. A helical transmembrane segment spans residues leucine 1025–histidine 1045. Over histidine 1046–valine 1321 the chain is Cytoplasmic. Polar residues predominate over residues asparagine 1073–asparagine 1083. Disordered stretches follow at residues asparagine 1073–alanine 1094, valine 1198–arginine 1219, glutamine 1231–alanine 1265, and serine 1294–valine 1321. The span at asparagine 1233 to serine 1250 shows a compositional bias: polar residues. Positions threonine 1319–valine 1321 match the PDZ-binding motif.

Belongs to the G-protein coupled receptor 2 family. Adhesion G-protein coupled receptor (ADGR) subfamily. In terms of assembly, interacts (via PDZ-binding motif) with DLG1.

Its subcellular location is the membrane. In terms of biological role, orphan receptor that may have a role in planar cell polarity pathway. This is Adhesion G protein-coupled receptor A3 from Homo sapiens (Human).